The sequence spans 288 residues: Ribosomal RNA small subunit methyltransferase A (288 aa).

Positions 28, 30, 55, 77, 103, and 123 each coordinate S-adenosyl-L-methionine.

Belongs to the class I-like SAM-binding methyltransferase superfamily. rRNA adenine N(6)-methyltransferase family. RsmA subfamily.

The protein resides in the cytoplasm. The catalysed reaction is adenosine(1518)/adenosine(1519) in 16S rRNA + 4 S-adenosyl-L-methionine = N(6)-dimethyladenosine(1518)/N(6)-dimethyladenosine(1519) in 16S rRNA + 4 S-adenosyl-L-homocysteine + 4 H(+). Functionally, specifically dimethylates two adjacent adenosines (A1518 and A1519) in the loop of a conserved hairpin near the 3'-end of 16S rRNA in the 30S particle. May play a critical role in biogenesis of 30S subunits. This chain is Ribosomal RNA small subunit methyltransferase A, found in Xanthobacter autotrophicus (strain ATCC BAA-1158 / Py2).